A 255-amino-acid polypeptide reads, in one-letter code: Hydroxyacylglutathione hydrolase (255 aa).

Residues H55, H57, D59, H60, H112, D129, and H167 each contribute to the Zn(2+) site.

This sequence belongs to the metallo-beta-lactamase superfamily. Glyoxalase II family. As to quaternary structure, monomer. Zn(2+) is required as a cofactor.

It carries out the reaction an S-(2-hydroxyacyl)glutathione + H2O = a 2-hydroxy carboxylate + glutathione + H(+). It functions in the pathway secondary metabolite metabolism; methylglyoxal degradation; (R)-lactate from methylglyoxal: step 2/2. Thiolesterase that catalyzes the hydrolysis of S-D-lactoyl-glutathione to form glutathione and D-lactic acid. The protein is Hydroxyacylglutathione hydrolase of Halorhodospira halophila (strain DSM 244 / SL1) (Ectothiorhodospira halophila (strain DSM 244 / SL1)).